The following is a 148-amino-acid chain: Nucleoside diphosphate kinase (148 aa).

The ATP site is built by K9, F57, R85, T91, R102, and N112. H115 serves as the catalytic Pros-phosphohistidine intermediate.

It belongs to the NDK family. Mg(2+) serves as cofactor.

It carries out the reaction a 2'-deoxyribonucleoside 5'-diphosphate + ATP = a 2'-deoxyribonucleoside 5'-triphosphate + ADP. The catalysed reaction is a ribonucleoside 5'-diphosphate + ATP = a ribonucleoside 5'-triphosphate + ADP. In terms of biological role, major role in the synthesis of nucleoside triphosphates other than ATP. The ATP gamma phosphate is transferred to the NDP beta phosphate via a ping-pong mechanism, using a phosphorylated active-site intermediate. The protein is Nucleoside diphosphate kinase of Helianthus annuus (Common sunflower).